The following is a 1097-amino-acid chain: RecBCD enzyme subunit RecC (1097 aa).

The protein belongs to the RecC family. As to quaternary structure, heterotrimer of RecB, RecC and RecD. All subunits contribute to DNA-binding.

Functionally, a helicase/nuclease that prepares dsDNA breaks (DSB) for recombinational DNA repair. Binds to DSBs and unwinds DNA via a highly rapid and processive ATP-dependent bidirectional helicase activity. Holoenzyme degrades any linearized DNA that is unable to undergo homologous recombination. In the holoenzyme this subunit recognizes the wild-type Chi sequence, and when added to isolated RecB increases its ATP-dependent helicase processivity. Unlike the case in E.coli, suppresses RecA-dependent homologous recombination, is instead required for single-strand annealing pathway repair of DSB. This chain is RecBCD enzyme subunit RecC, found in Mycobacterium tuberculosis (strain ATCC 25618 / H37Rv).